Reading from the N-terminus, the 363-residue chain is S-methylmethionine--homocysteine S-methyltransferase BHMT2 (363 aa).

A Hcy-binding domain is found at 11–305 (RGILERLESG…YHIRAIAEEL (295 aa)). Zn(2+) contacts are provided by cysteine 208, cysteine 290, and cysteine 291. Serine 321 bears the Phosphoserine mark.

As to quaternary structure, homotetramer. It depends on Zn(2+) as a cofactor.

It catalyses the reaction S-methyl-L-methionine + L-homocysteine = 2 L-methionine + H(+). It participates in amino-acid biosynthesis; L-methionine biosynthesis via de novo pathway; L-methionine from L-homocysteine (BhmT route): step 1/1. Functionally, involved in the regulation of homocysteine metabolism. Converts betaine and homocysteine to dimethylglycine and methionine, respectively. This reaction is also required for the irreversible oxidation of choline. This chain is S-methylmethionine--homocysteine S-methyltransferase BHMT2 (BHMT2), found in Pongo abelii (Sumatran orangutan).